The chain runs to 261 residues: Cytochrome c oxidase subunit 3 (261 aa).

Residues 1–15 (MTHQTHACHMVNPSP) are Mitochondrial matrix-facing. The chain crosses the membrane as a helical span at residues 16 to 34 (WPLTGALSGLLMTSGLIMW). At 35-40 (FHFNST) the chain is on the mitochondrial intermembrane side. Residues 41 to 66 (TLLMLGLTTNMLTMYQWWRDVIREST) traverse the membrane as a helical segment. Topologically, residues 67-72 (FQGHHT) are mitochondrial matrix. The chain crosses the membrane as a helical span at residues 73–105 (PNVQKGLRYGMILFIISEVLFFTGFFWAFYHSS). At 106–128 (LAPTPELGGCWPPTGIHPLNPLE) the chain is on the mitochondrial intermembrane side. A helical transmembrane segment spans residues 129 to 152 (VPLLNTSVLLASGVSITWAHHSLM). Residues 153–155 (EGN) lie on the Mitochondrial matrix side of the membrane. A helical membrane pass occupies residues 156 to 183 (RNHMLQALFITIALGVYFTLLQASEYYE). Topologically, residues 184-190 (APFTISD) are mitochondrial intermembrane. A helical membrane pass occupies residues 191–223 (GVYGSTFFVATGFHGLHVIIGSTFLIVCFFRQL). At 224 to 232 (KFHFTSSHH) the chain is on the mitochondrial matrix side. A helical transmembrane segment spans residues 233 to 256 (FGFEAAAWYWHFVDVVWLFLYVSI). The Mitochondrial intermembrane segment spans residues 257 to 261 (YWWGS).

It belongs to the cytochrome c oxidase subunit 3 family. Component of the cytochrome c oxidase (complex IV, CIV), a multisubunit enzyme composed of 14 subunits. The complex is composed of a catalytic core of 3 subunits MT-CO1, MT-CO2 and MT-CO3, encoded in the mitochondrial DNA, and 11 supernumerary subunits COX4I, COX5A, COX5B, COX6A, COX6B, COX6C, COX7A, COX7B, COX7C, COX8 and NDUFA4, which are encoded in the nuclear genome. The complex exists as a monomer or a dimer and forms supercomplexes (SCs) in the inner mitochondrial membrane with NADH-ubiquinone oxidoreductase (complex I, CI) and ubiquinol-cytochrome c oxidoreductase (cytochrome b-c1 complex, complex III, CIII), resulting in different assemblies (supercomplex SCI(1)III(2)IV(1) and megacomplex MCI(2)III(2)IV(2)).

The protein resides in the mitochondrion inner membrane. It carries out the reaction 4 Fe(II)-[cytochrome c] + O2 + 8 H(+)(in) = 4 Fe(III)-[cytochrome c] + 2 H2O + 4 H(+)(out). Its function is as follows. Component of the cytochrome c oxidase, the last enzyme in the mitochondrial electron transport chain which drives oxidative phosphorylation. The respiratory chain contains 3 multisubunit complexes succinate dehydrogenase (complex II, CII), ubiquinol-cytochrome c oxidoreductase (cytochrome b-c1 complex, complex III, CIII) and cytochrome c oxidase (complex IV, CIV), that cooperate to transfer electrons derived from NADH and succinate to molecular oxygen, creating an electrochemical gradient over the inner membrane that drives transmembrane transport and the ATP synthase. Cytochrome c oxidase is the component of the respiratory chain that catalyzes the reduction of oxygen to water. Electrons originating from reduced cytochrome c in the intermembrane space (IMS) are transferred via the dinuclear copper A center (CU(A)) of subunit 2 and heme A of subunit 1 to the active site in subunit 1, a binuclear center (BNC) formed by heme A3 and copper B (CU(B)). The BNC reduces molecular oxygen to 2 water molecules using 4 electrons from cytochrome c in the IMS and 4 protons from the mitochondrial matrix. This chain is Cytochrome c oxidase subunit 3 (MT-CO3), found in Gazella saudiya (Saudi gazelle).